The following is a 355-amino-acid chain: Serum paraoxonase/arylesterase 1 (355 aa).

C42 and C353 are disulfide-bonded. Residues E53 and D54 each coordinate Ca(2+). H115 acts as the Proton acceptor in catalysis. 4 residues coordinate Ca(2+): I117, N168, D169, and N224. N-linked (GlcNAc...) asparagine glycosylation is present at N253. Positions 269 and 270 each coordinate Ca(2+). N-linked (GlcNAc...) asparagine glycans are attached at residues N270 and N324.

The protein belongs to the paraoxonase family. Homodimer. Heterooligomer with phosphate-binding protein (HPBP). Interacts with CLU. The cofactor is Ca(2+). Post-translationally, glycosylated. In terms of processing, the signal sequence is not cleaved. Present in two forms, form B contains a disulfide bond, form A does not. In terms of tissue distribution, plasma, associated with HDL (at protein level). Expressed in liver, but not in heart, brain, placenta, lung, skeletal muscle, kidney or pancreas.

Its subcellular location is the secreted. The protein localises to the extracellular space. It carries out the reaction a phenyl acetate + H2O = a phenol + acetate + H(+). The catalysed reaction is An aryl dialkyl phosphate + H2O = dialkyl phosphate + an aryl alcohol.. The enzyme catalyses an N-acyl-L-homoserine lactone + H2O = an N-acyl-L-homoserine + H(+). Its function is as follows. Hydrolyzes the toxic metabolites of a variety of organophosphorus insecticides. Capable of hydrolyzing a broad spectrum of organophosphate substrates and lactones, and a number of aromatic carboxylic acid esters. Mediates an enzymatic protection of low density lipoproteins against oxidative modification and the consequent series of events leading to atheroma formation. The protein is Serum paraoxonase/arylesterase 1 (PON1) of Homo sapiens (Human).